A 402-amino-acid polypeptide reads, in one-letter code: Zinc finger protein 322 (402 aa).

The segment at 43–65 (YQCLECKQNFCENLALIMCERTH) adopts a C2H2-type 1; atypical zinc-finger fold. 8 consecutive C2H2-type zinc fingers follow at residues 71–93 (YKCDMCEKTFVQSSDLTSHQRIH), 99–121 (YKCSKCEKSFWHHLALSGHQRTH), 127–149 (YTCDICGKNFGQSSDLLVHQRSH), 155–177 (YLCSECDKCFSRSTNLIRHRRTH), 183–205 (FKCLECEKAFSGKSDLISHQRTH), 211–233 (YKCNKCEKSYRHRSAFIVHKRVH), 239–261 (YKCGACEKCFGQKSDLIVHQRVH), and 267–289 (YKCLECMRSFTRSANLIRHQATH). The segment at 293 to 315 (FKCLEYEKSFNCSSDLIVHQRIH) adopts a C2H2-type 10; degenerate zinc-finger fold. The C2H2-type 11; degenerate zinc finger occupies 351–373 (YKYTVCDKSFHQSSALLQHQTVH). Residue Ser391 is modified to Phosphoserine.

It belongs to the krueppel C2H2-type zinc-finger protein family. As to quaternary structure, interacts with POU5F1. In terms of tissue distribution, ubiquitous. Highly expressed in heart and skeletal muscle.

It is found in the cytoplasm. Its subcellular location is the nucleus. Its function is as follows. Transcriptional activator. Important for maintenance of pluripotency in embryonic stem cells. Binds directly to the POU5F1 distal enhancer and the NANOG proximal promoter, and enhances expression of both genes. Can also bind to numerous other gene promoters and regulates expression of many other pluripotency factors, either directly or indirectly. Promotes inhibition of MAPK signaling during embryonic stem cell differentiation. The sequence is that of Zinc finger protein 322 (ZNF322) from Homo sapiens (Human).